Here is a 181-residue protein sequence, read N- to C-terminus: NADH-quinone oxidoreductase subunit 2 (181 aa).

[2Fe-2S] cluster-binding residues include cysteine 83, serine 87, cysteine 88, cysteine 124, and cysteine 128. Cysteines 144 and 172 form a disulfide.

This sequence belongs to the complex I 24 kDa subunit family. In terms of assembly, NDH-1 is composed of 15 different subunits, Nqo1 to Nqo15. The complex has a L-shaped structure, with the hydrophobic arm (subunits Nqo7, Nqo8 and Nqo10 to Nqo14) embedded in the membrane and the hydrophilic peripheral arm (subunits Nqo1 to Nqo6, Nqo9 and Nqo15) protruding into the bacterial cytoplasm. The hydrophilic domain contains all the redox centers. [2Fe-2S] cluster is required as a cofactor.

The protein localises to the cell membrane. The enzyme catalyses a quinone + NADH + 5 H(+)(in) = a quinol + NAD(+) + 4 H(+)(out). Functionally, NDH-1 shuttles electrons from NADH, via FMN and iron-sulfur (Fe-S) centers, to quinones in the respiratory chain. The immediate electron acceptor for the enzyme in this species is menaquinone. Couples the redox reaction to proton translocation (for every two electrons transferred, four hydrogen ions are translocated across the cytoplasmic membrane), and thus conserves the redox energy in a proton gradient required for the synthesis of ATP. This Thermus thermophilus (strain ATCC 27634 / DSM 579 / HB8) protein is NADH-quinone oxidoreductase subunit 2 (nqo2).